The chain runs to 358 residues: MIRKRLIIVAGGTGGHIFPGLAIANNMITQGWDVRWLGTKNRIEADLVPKHGITTYFLSIYGYGLHGKKQKILAIVSILQAVLQSYYIMRKWRPDIVLGMGGYISGPCGLAAWMCKIPLVIHEQNRVTGLTNYYLSKFAKKVLQAFPSVFPNANVVGNPIRKEILAVIEPSLRLCNRTGPIRILVIGGSQGSKIINQILPVVAAQLAGKYVFWHQVGKGALKEVQQVYTSMLKNQLNYKLVEFIDDIAIAYAWADVVICRSGALTISEIAAVGLPAIFVPFMHKDRHQYWNALPLEQLGAAKILEQPNFTAEKVSQILMSWDRSKLFTMAQRARTIAMVDSTERVTSELIELANNTKH.

UDP-N-acetyl-alpha-D-glucosamine-binding positions include 13–15 (TGG), Asn125, Arg161, Ser189, Ile244, and Gln288.

It belongs to the glycosyltransferase 28 family. MurG subfamily.

The protein resides in the cell membrane. The enzyme catalyses di-trans,octa-cis-undecaprenyl diphospho-N-acetyl-alpha-D-muramoyl-L-alanyl-D-glutamyl-meso-2,6-diaminopimeloyl-D-alanyl-D-alanine + UDP-N-acetyl-alpha-D-glucosamine = di-trans,octa-cis-undecaprenyl diphospho-[N-acetyl-alpha-D-glucosaminyl-(1-&gt;4)]-N-acetyl-alpha-D-muramoyl-L-alanyl-D-glutamyl-meso-2,6-diaminopimeloyl-D-alanyl-D-alanine + UDP + H(+). It participates in cell wall biogenesis; peptidoglycan biosynthesis. Functionally, cell wall formation. Catalyzes the transfer of a GlcNAc subunit on undecaprenyl-pyrophosphoryl-MurNAc-pentapeptide (lipid intermediate I) to form undecaprenyl-pyrophosphoryl-MurNAc-(pentapeptide)GlcNAc (lipid intermediate II). The polypeptide is UDP-N-acetylglucosamine--N-acetylmuramyl-(pentapeptide) pyrophosphoryl-undecaprenol N-acetylglucosamine transferase (Baumannia cicadellinicola subsp. Homalodisca coagulata).